The sequence spans 233 residues: MEKTMSNSTPTPAAHRLGLVGRKVGMTRIFTEDGESIPVTVLDVSNNRVTQVKSLESDGYAAIQVTYGTRRATRVVKPQAGHYAKAGAEAGSILKEFRLDPARAAEFAAGAVIAVESVFEAGQQVDVTGTSIGKGFAGTIKRHNFGSQRASHGNSRSHRVPGSIGQAQDPGRIFPGKRMSGHMGDVTRTVQNLDVVRVDAERGLLMVKGAVPGHAGGDVIVRPAVKAPAKKGA.

The tract at residues 146–171 (GSQRASHGNSRSHRVPGSIGQAQDPG) is disordered. The residue at position 168 (Q168) is an N5-methylglutamine.

This sequence belongs to the universal ribosomal protein uL3 family. In terms of assembly, part of the 50S ribosomal subunit. Forms a cluster with proteins L14 and L19. Post-translationally, methylated by PrmB.

In terms of biological role, one of the primary rRNA binding proteins, it binds directly near the 3'-end of the 23S rRNA, where it nucleates assembly of the 50S subunit. The chain is Large ribosomal subunit protein uL3 from Bordetella bronchiseptica (strain ATCC BAA-588 / NCTC 13252 / RB50) (Alcaligenes bronchisepticus).